The sequence spans 121 residues: Small ribosomal subunit protein bS16 (121 aa).

The interval 80-121 (AGVREKTERNNPNKAKPGKKAQERAEEKAAKAAEAAEAADAE) is disordered. Composition is skewed to basic and acidic residues over residues 81–90 (GVREKTERNN) and 99–110 (KAQERAEEKAAK).

Belongs to the bacterial ribosomal protein bS16 family.

The protein is Small ribosomal subunit protein bS16 of Ruegeria sp. (strain TM1040) (Silicibacter sp.).